Consider the following 247-residue polypeptide: uncharacterized protein (247 aa).

The NADP(+) site is built by Leu-11, Asn-85, and Lys-119. The Proton donor role is filled by Ser-136. NADP(+) is bound by residues Tyr-150, Lys-154, Val-181, and Thr-183. The active-site Proton acceptor is the Tyr-150. Lys-154 acts as the Lowers pKa of active site Tyr in catalysis.

Belongs to the short-chain dehydrogenases/reductases (SDR) family.

This is an uncharacterized protein from Schizosaccharomyces pombe (strain 972 / ATCC 24843) (Fission yeast).